Reading from the N-terminus, the 254-residue chain is Small ribosomal subunit protein uS2 (254 aa).

It belongs to the universal ribosomal protein uS2 family.

The chain is Small ribosomal subunit protein uS2 from Legionella pneumophila subsp. pneumophila (strain Philadelphia 1 / ATCC 33152 / DSM 7513).